A 568-amino-acid chain; its full sequence is Acetate--CoA ligase CCL3 (568 aa).

Residues T204–K212, H340–S345, D437, I449–R452, and K547 each bind ATP. The interval T272–H340 is SBD1. Positions T341–Y417 are SBD2.

This sequence belongs to the ATP-dependent AMP-binding enzyme family. As to expression, mostly expressed in glandular trichomes (lupulin glands) after flowering and in old leaves, and, to a lower extent, in stems, young leaves, cones and flowers.

It localises to the cytoplasm. Its subcellular location is the cytosol. It carries out the reaction acetate + ATP + CoA = acetyl-CoA + AMP + diphosphate. The catalysed reaction is propanoate + ATP + CoA = propanoyl-CoA + AMP + diphosphate. The enzyme catalyses butanoate + ATP + CoA = butanoyl-CoA + AMP + diphosphate. It catalyses the reaction 3-methylbutanoate + ATP + CoA = 3-methylbutanoyl-CoA + AMP + diphosphate. It carries out the reaction pentanoate + ATP + CoA = pentanoyl-CoA + AMP + diphosphate. The catalysed reaction is hexanoate + ATP + CoA = hexanoyl-CoA + AMP + diphosphate. The enzyme catalyses 2-methylpropanoate + ATP + CoA = 2-methylpropanoyl-CoA + AMP + diphosphate. It catalyses the reaction 2-methylbutanoate + ATP + CoA = 2-methylbutanoyl-CoA + AMP + diphosphate. It carries out the reaction 2-methylpentanoate + ATP + CoA = 2-methylpentanoyl-CoA + AMP + diphosphate. The catalysed reaction is 3-methylpentanoate + ATP + CoA = 3-methylpentanoyl-CoA + AMP + diphosphate. The enzyme catalyses 4-methylpentanoate + ATP + CoA = 4-methylpentanoyl-CoA + AMP + diphosphate. Its pathway is secondary metabolite biosynthesis. Its function is as follows. Involved in the biosynthesis of prenylated phenolics natural products which contribute to the bitter taste of beer and display broad biological activities. Catalyzes the ligation of CoA on propanoate to produce propanoyl-CoA. Can also use 2-methylpropanoate (isobutyric acid), acetate, butanoate, isovalerate, pentanoate, hexanoate, 2-methylbutanoate, 2-methylpentanoate, 3-methylpentanoate and 4-methylpentanoate as substrates with a lower efficiency. Triggers the formation of very short chain acyl-CoAs from the corresponding fatty acids, including acetic acid, propanoic acid, butyric acid and its isomer. The polypeptide is Acetate--CoA ligase CCL3 (Humulus lupulus (European hop)).